A 501-amino-acid polypeptide reads, in one-letter code: Acid-sensing ion channel 1A (501 aa).

Residues 1–54 (MKTSVMDLKVEPMDIDFDQPPPLQVFAHTSTLHGISHIFSYEKITAKCCLWVVF) lie on the Cytoplasmic side of the membrane. Residues 55–71 (FLSSLTFLMYVCIDRIQ) form a helical membrane-spanning segment. The Extracellular portion of the chain corresponds to 72-429 (FYLEYPHVTK…ETIEQRKAYE (358 aa)). 7 cysteine pairs are disulfide-bonded: cysteine 98–cysteine 199, cysteine 177–cysteine 184, cysteine 294–cysteine 369, cysteine 312–cysteine 365, cysteine 316–cysteine 363, cysteine 325–cysteine 347, and cysteine 327–cysteine 339. A glycan (N-linked (GlcNAc...) asparagine) is linked at asparagine 164. N-linked (GlcNAc...) asparagine glycosylation is present at asparagine 370. A discontinuously helical membrane pass occupies residues 430 to 460 (VAGLLGDIGGQMGLFIGASILTILELFDYLY). A GAS motif; ion selectivity filter motif is present at residues 446–448 (GAS). The Cytoplasmic segment spans residues 461 to 501 (EVMKYRLCRCSNKKHHNNNNNTDHNAVFSLDDVNCHVSKFH).

The protein belongs to the amiloride-sensitive sodium channel (TC 1.A.6) family. ASIC1 subfamily. As to quaternary structure, homotrimer. Heterotrimer; with other ASIC proteins producing channel with different properties. Interacts with asic1c. Expressed in central nervous system. Faintly expressed in the trunk, presumably in dorsal root ganglia.

Its subcellular location is the cell membrane. The protein localises to the postsynaptic cell membrane. It localises to the cell projection. The protein resides in the dendrite. It carries out the reaction Na(+)(in) = Na(+)(out). The enzyme catalyses K(+)(in) = K(+)(out). The catalysed reaction is Li(+)(in) = Li(+)(out). It catalyses the reaction Ca(2+)(in) = Ca(2+)(out). Inhibited by the diuretic drug amiloride. Forms voltage-independent, pH-gated trimeric sodium channels that act as postsynaptic excitatory receptors in the nervous system, playing a crucial role in regulating synaptic plasticity, learning, and memory. Upon extracellular pH drop this channel elicits transient, fast activating, and completely desensitizing inward currents. Displays high selectivity for sodium ions but can also permit the permeation of other cations. This chain is Acid-sensing ion channel 1A (asic1a), found in Danio rerio (Zebrafish).